The following is a 333-amino-acid chain: Protoheme IX farnesyltransferase (333 aa).

8 helical membrane-spanning segments follow: residues 31 to 51, 52 to 72, 115 to 135, 152 to 172, 178 to 198, 223 to 243, 244 to 264, and 303 to 323; these read VMSLVVFTGLTGLLAARAPIH, PVLAAIAVLCIAVGAGASGAL, MFLGFAVNWLAAGLLAFTIVF, IVIGGLAGALPPAIGWAAATG, AWLMVAIIFFWTPPHFWALSL, KQILLYSLILFPICLSPVLTG, LGGPIYLAVSGLGGLVFLLLA, and LFAFSILYLFALFAALLGEAV.

This sequence belongs to the UbiA prenyltransferase family. Protoheme IX farnesyltransferase subfamily.

The protein localises to the cell inner membrane. It carries out the reaction heme b + (2E,6E)-farnesyl diphosphate + H2O = Fe(II)-heme o + diphosphate. It functions in the pathway porphyrin-containing compound metabolism; heme O biosynthesis; heme O from protoheme: step 1/1. Functionally, converts heme B (protoheme IX) to heme O by substitution of the vinyl group on carbon 2 of heme B porphyrin ring with a hydroxyethyl farnesyl side group. This Caulobacter vibrioides (strain ATCC 19089 / CIP 103742 / CB 15) (Caulobacter crescentus) protein is Protoheme IX farnesyltransferase.